The chain runs to 117 residues: Large ribosomal subunit protein bL19 (117 aa).

Belongs to the bacterial ribosomal protein bL19 family.

This protein is located at the 30S-50S ribosomal subunit interface and may play a role in the structure and function of the aminoacyl-tRNA binding site. The protein is Large ribosomal subunit protein bL19 of Methylibium petroleiphilum (strain ATCC BAA-1232 / LMG 22953 / PM1).